We begin with the raw amino-acid sequence, 197 residues long: Holliday junction branch migration complex subunit RuvA (197 aa).

Residues 1–63 (MFDYIKGQLT…EDAHLLFGFH (63 aa)) are domain I. Residues 64–142 (TENEKDVFLK…TIPEGGQAQQ (79 aa)) are domain II. Residues 142-146 (QMPKA) form a flexible linker region. The domain III stretch occupies residues 147-197 (KGNQQLDEAIEALLALGYKATELKKIRAFFEGTDDTAEQYIKSALKMLMKG).

This sequence belongs to the RuvA family. In terms of assembly, homotetramer. Forms an RuvA(8)-RuvB(12)-Holliday junction (HJ) complex. HJ DNA is sandwiched between 2 RuvA tetramers; dsDNA enters through RuvA and exits via RuvB. An RuvB hexamer assembles on each DNA strand where it exits the tetramer. Each RuvB hexamer is contacted by two RuvA subunits (via domain III) on 2 adjacent RuvB subunits; this complex drives branch migration. In the full resolvosome a probable DNA-RuvA(4)-RuvB(12)-RuvC(2) complex forms which resolves the HJ.

It localises to the cytoplasm. In terms of biological role, the RuvA-RuvB-RuvC complex processes Holliday junction (HJ) DNA during genetic recombination and DNA repair, while the RuvA-RuvB complex plays an important role in the rescue of blocked DNA replication forks via replication fork reversal (RFR). RuvA specifically binds to HJ cruciform DNA, conferring on it an open structure. The RuvB hexamer acts as an ATP-dependent pump, pulling dsDNA into and through the RuvAB complex. HJ branch migration allows RuvC to scan DNA until it finds its consensus sequence, where it cleaves and resolves the cruciform DNA. In Streptococcus uberis (strain ATCC BAA-854 / 0140J), this protein is Holliday junction branch migration complex subunit RuvA.